We begin with the raw amino-acid sequence, 76 residues long: Large ribosomal subunit protein bL31 (76 aa).

The protein belongs to the bacterial ribosomal protein bL31 family. Type A subfamily. As to quaternary structure, part of the 50S ribosomal subunit.

Functionally, binds the 23S rRNA. This chain is Large ribosomal subunit protein bL31, found in Beijerinckia indica subsp. indica (strain ATCC 9039 / DSM 1715 / NCIMB 8712).